Reading from the N-terminus, the 299-residue chain is Tricarboxylate transport protein (299 aa).

3 Solcar repeats span residues 10–97 (VDPL…IKDM), 109–199 (TRGV…IKTL), and 212–297 (LSSG…VLVM). Transmembrane regions (helical) follow at residues 16 to 36 (FLAG…FEFA), 66 to 86 (IGSI…KAGI), 113 to 133 (IAGL…FEAI), 174 to 193 (GVLP…LGCY), 215 to 235 (GLTF…TMPL), and 272 to 291 (GATP…FTIY).

This sequence belongs to the mitochondrial carrier (TC 2.A.29) family.

The protein resides in the mitochondrion inner membrane. Functionally, transport of citrate across inner mitochondrial membrane. The polypeptide is Tricarboxylate transport protein (CTP1) (Saccharomyces cerevisiae (strain ATCC 204508 / S288c) (Baker's yeast)).